Reading from the N-terminus, the 359-residue chain is Heat-inducible transcription repressor HrcA (359 aa).

Belongs to the HrcA family.

In terms of biological role, negative regulator of class I heat shock genes (grpE-dnaK-dnaJ and groELS operons). Prevents heat-shock induction of these operons. This is Heat-inducible transcription repressor HrcA from Sinorhizobium medicae (strain WSM419) (Ensifer medicae).